A 192-amino-acid chain; its full sequence is Large ribosomal subunit protein uL3 (192 aa).

This sequence belongs to the universal ribosomal protein uL3 family. Part of the 50S ribosomal subunit. Forms a cluster with proteins L14 and L19.

Its function is as follows. One of the primary rRNA binding proteins, it binds directly near the 3'-end of the 23S rRNA, where it nucleates assembly of the 50S subunit. This is Large ribosomal subunit protein uL3 (rplC) from Helicobacter hepaticus (strain ATCC 51449 / 3B1).